The sequence spans 142 residues: Hemoglobin subunit beta-1 (142 aa).

The 141-residue stretch at 2–142 (SLTDEEIRLI…VTEALSCQYH (141 aa)) folds into the Globin domain. Heme b contacts are provided by histidine 59 and histidine 88.

Belongs to the globin family. As to quaternary structure, heterotetramer of two alpha chains and two beta chains. Red blood cells.

Functionally, involved in oxygen transport from the lung to the various peripheral tissues. This chain is Hemoglobin subunit beta-1 (HBB1), found in Torpedo marmorata (Marbled electric ray).